We begin with the raw amino-acid sequence, 158 residues long: Endoribonuclease YbeY (158 aa).

Histidine 119, histidine 123, and aspartate 129 together coordinate Zn(2+).

It belongs to the endoribonuclease YbeY family. Zn(2+) is required as a cofactor.

The protein localises to the cytoplasm. Its function is as follows. Single strand-specific metallo-endoribonuclease involved in late-stage 70S ribosome quality control and in maturation of the 3' terminus of the 16S rRNA. This Chlamydia felis (strain Fe/C-56) (Chlamydophila felis) protein is Endoribonuclease YbeY.